Reading from the N-terminus, the 937-residue chain is Aconitate hydratase A (937 aa).

The [4Fe-4S] cluster site is built by Cys-439, Cys-505, and Cys-508. The interval 898-921 (KKESKSTQSTTSKGCGSADTSSET) is disordered.

Belongs to the aconitase/IPM isomerase family. As to quaternary structure, monomer. [4Fe-4S] cluster serves as cofactor.

The enzyme catalyses citrate = D-threo-isocitrate. It carries out the reaction (2S,3R)-3-hydroxybutane-1,2,3-tricarboxylate = 2-methyl-cis-aconitate + H2O. It participates in carbohydrate metabolism; tricarboxylic acid cycle; isocitrate from oxaloacetate: step 2/2. Its pathway is organic acid metabolism; propanoate degradation. Its function is as follows. Involved in the catabolism of short chain fatty acids (SCFA) via the tricarboxylic acid (TCA)(acetyl degradation route) and probably the 2-methylcitrate cycle I (propionate degradation route). Catalyzes the reversible isomerization of citrate to isocitrate via cis-aconitate. Could catalyze the hydration of 2-methyl-cis-aconitate to yield (2R,3S)-2-methylisocitrate. The apo form of AcnA functions as a RNA-binding regulatory protein. In Francisella tularensis subsp. holarctica (strain LVS), this protein is Aconitate hydratase A (acn).